The sequence spans 466 residues: Asparagine--tRNA ligase (466 aa).

Belongs to the class-II aminoacyl-tRNA synthetase family. As to quaternary structure, homodimer.

The protein resides in the cytoplasm. The enzyme catalyses tRNA(Asn) + L-asparagine + ATP = L-asparaginyl-tRNA(Asn) + AMP + diphosphate + H(+). This Shewanella loihica (strain ATCC BAA-1088 / PV-4) protein is Asparagine--tRNA ligase.